Here is a 192-residue protein sequence, read N- to C-terminus: Photosystem I assembly protein Ycf4 (192 aa).

2 helical membrane passes run 30 to 52 (YFWATAVSIGGLGFFLAGLSSYL) and 72 to 94 (IAIGFYGVAALLLATYLWLAIAW).

This sequence belongs to the Ycf4 family.

It localises to the cellular thylakoid membrane. Functionally, seems to be required for the assembly of the photosystem I complex. The sequence is that of Photosystem I assembly protein Ycf4 from Thermosynechococcus vestitus (strain NIES-2133 / IAM M-273 / BP-1).